The sequence spans 204 residues: Elongation factor Ts (204 aa).

The involved in Mg(2+) ion dislocation from EF-Tu stretch occupies residues 87–90 (TDFV).

The protein belongs to the EF-Ts family.

Its subcellular location is the cytoplasm. Its function is as follows. Associates with the EF-Tu.GDP complex and induces the exchange of GDP to GTP. It remains bound to the aminoacyl-tRNA.EF-Tu.GTP complex up to the GTP hydrolysis stage on the ribosome. The chain is Elongation factor Ts from Frankia casuarinae (strain DSM 45818 / CECT 9043 / HFP020203 / CcI3).